Consider the following 146-residue polypeptide: Prostaglandin E synthase 3 (146 aa).

The 76-residue stretch at 1–76 folds into the CS domain; sequence VFIEFCVEDS…ESGQAWPRLT (76 aa). Positions 110–146 are disordered; sequence SEMMNNMGGDDDVDLPEVDGADDDSPDSDDEKMPDLE. Positions 118-139 are enriched in acidic residues; that stretch reads GDDDVDLPEVDGADDDSPDSDD.

It belongs to the p23/wos2 family. In terms of assembly, binds to telomerase. Binds to the progesterone receptor.

It localises to the cytoplasm. The enzyme catalyses prostaglandin H2 = prostaglandin E2. It functions in the pathway lipid metabolism; prostaglandin biosynthesis. Molecular chaperone. This is Prostaglandin E synthase 3 (PTGES3) from Gallus gallus (Chicken).